Here is a 154-residue protein sequence, read N- to C-terminus: Lipoprotein signal peptidase (154 aa).

Transmembrane regions (helical) follow at residues 55–75 and 84–104; these read GHMWFFYLITVVVIGIIIYIM and LFSISLAFILGGAIGNFIDRV. Catalysis depends on residues Asp111 and Asp129. A helical membrane pass occupies residues 124–144; the sequence is IFNVADAALSVGVVLMLVYVF.

The protein belongs to the peptidase A8 family.

Its subcellular location is the cell membrane. The enzyme catalyses Release of signal peptides from bacterial membrane prolipoproteins. Hydrolyzes -Xaa-Yaa-Zaa-|-(S,diacylglyceryl)Cys-, in which Xaa is hydrophobic (preferably Leu), and Yaa (Ala or Ser) and Zaa (Gly or Ala) have small, neutral side chains.. It participates in protein modification; lipoprotein biosynthesis (signal peptide cleavage). In terms of biological role, this protein specifically catalyzes the removal of signal peptides from prolipoproteins. The chain is Lipoprotein signal peptidase from Listeria monocytogenes serotype 4b (strain CLIP80459).